The following is a 312-amino-acid chain: Porphobilinogen deaminase (312 aa).

Cysteine 243 is subject to S-(dipyrrolylmethanemethyl)cysteine.

The protein belongs to the HMBS family. In terms of assembly, monomer. Dipyrromethane serves as cofactor.

The enzyme catalyses 4 porphobilinogen + H2O = hydroxymethylbilane + 4 NH4(+). Its pathway is porphyrin-containing compound metabolism; protoporphyrin-IX biosynthesis; coproporphyrinogen-III from 5-aminolevulinate: step 2/4. In terms of biological role, tetrapolymerization of the monopyrrole PBG into the hydroxymethylbilane pre-uroporphyrinogen in several discrete steps. This chain is Porphobilinogen deaminase, found in Vibrio campbellii (strain ATCC BAA-1116).